The primary structure comprises 263 residues: Urease accessory protein UreH (263 aa).

The protein belongs to the UreD family. In terms of assembly, ureH, UreF and UreG form a complex that acts as a GTP-hydrolysis-dependent molecular chaperone, activating the urease apoprotein by helping to assemble the nickel containing metallocenter of UreC. The UreE protein probably delivers the nickel.

It is found in the cytoplasm. Its function is as follows. Required for maturation of urease via the functional incorporation of the urease nickel metallocenter. The sequence is that of Urease accessory protein UreH from Helicobacter acinonychis (strain Sheeba).